We begin with the raw amino-acid sequence, 336 residues long: Flap endonuclease 1 (336 aa).

Positions 1 to 98 (MGADIGDLFE…AEIEERKKRR (98 aa)) are N-domain. Residues Asp-27, Asp-80, Glu-151, Glu-153, Asp-172, Asp-174, and Asp-235 each contribute to the Mg(2+) site. Residues 115–256 (DAKKYAQAAG…KALNYIKTYG (142 aa)) form an I-domain region. Positions 328 to 336 (TQATLERWF) are interaction with PCNA.

It belongs to the XPG/RAD2 endonuclease family. FEN1 subfamily. Interacts with PCNA. PCNA stimulates the nuclease activity without altering cleavage specificity. Requires Mg(2+) as cofactor.

Its function is as follows. Structure-specific nuclease with 5'-flap endonuclease and 5'-3' exonuclease activities involved in DNA replication and repair. During DNA replication, cleaves the 5'-overhanging flap structure that is generated by displacement synthesis when DNA polymerase encounters the 5'-end of a downstream Okazaki fragment. Binds the unpaired 3'-DNA end and kinks the DNA to facilitate 5' cleavage specificity. Cleaves one nucleotide into the double-stranded DNA from the junction in flap DNA, leaving a nick for ligation. Also involved in the base excision repair (BER) pathway. Acts as a genome stabilization factor that prevents flaps from equilibrating into structures that lead to duplications and deletions. Also possesses 5'-3' exonuclease activity on nicked or gapped double-stranded DNA. The chain is Flap endonuclease 1 from Archaeoglobus fulgidus (strain ATCC 49558 / DSM 4304 / JCM 9628 / NBRC 100126 / VC-16).